The primary structure comprises 217 residues: Cytidylate kinase (217 aa).

9 to 17 provides a ligand contact to ATP; sequence GPAASGKSS.

It belongs to the cytidylate kinase family. Type 1 subfamily.

It localises to the cytoplasm. It catalyses the reaction CMP + ATP = CDP + ADP. The enzyme catalyses dCMP + ATP = dCDP + ADP. In Bdellovibrio bacteriovorus (strain ATCC 15356 / DSM 50701 / NCIMB 9529 / HD100), this protein is Cytidylate kinase.